The primary structure comprises 129 residues: uncharacterized protein (129 aa).

An Isoglutamyl lysine isopeptide (Lys-Gln) (interchain with Q-Cter in protein Pup) cross-link involves residue lysine 121.

This is an uncharacterized protein from Mycolicibacterium smegmatis (strain ATCC 700084 / mc(2)155) (Mycobacterium smegmatis).